Consider the following 230-residue polypeptide: uncharacterized protein (230 aa).

A signal peptide spans 1–22; sequence MNIRSFLLISIFTAISYLVVDG. At 23-167 the chain is on the lumenal side; sequence ATPRTFAPSA…YTPYGGVKAL (145 aa). Residues 55-90 form a disordered region; sequence SSSSSSSSISTSHDSQPSTSSSSPSSTSTSSSSGTS. Residues 168-188 traverse the membrane as a helical segment; that stretch reads IGILVGVVVGSVFLLAIVMVI. Over 189–230 the chain is Cytoplasmic; the sequence is ARIWGPRLLANKDQNNNNEDLDSNLVSKDSEGTPQITYASNF. The interval 208–230 is disordered; the sequence is DLDSNLVSKDSEGTPQITYASNF.

The protein localises to the endoplasmic reticulum membrane. This is an uncharacterized protein from Schizosaccharomyces pombe (strain 972 / ATCC 24843) (Fission yeast).